We begin with the raw amino-acid sequence, 1201 residues long: Potassium channel subfamily T member 1 (1201 aa).

Residues 1-28 (MARAKLKNSPSESNSHVKTVPPATTEDV) form a disordered region. Topologically, residues 1 to 92 (MARAKLKNSP…FFIKNQRSSL (92 aa)) are cytoplasmic. The segment covering 8-17 (NSPSESNSHV) has biased composition (polar residues). The helical transmembrane segment at 93-115 (RIRLFNFSLKLLTCLLYIVRVLL) threads the bilayer. Over 116–152 (DNPEEGIGCWECEKQNYTLFNQSTKINWSHIFWVDRK) the chain is Extracellular. N-linked (GlcNAc...) asparagine glycosylation is found at N131 and N136. A helical membrane pass occupies residues 153–175 (LPLWAVQVSIALISFLETMLLIY). The Cytoplasmic segment spans residues 176 to 184 (LSYKGNIWE). Residues 185–206 (QIFRISFILEMINTVPFIITIF) traverse the membrane as a helical segment. At 207–216 (WPPLRNLFIP) the chain is on the extracellular side. Residues 217–229 (VFLNCWLAKYALE) traverse the membrane as a helical segment. Over 230 to 249 (NMINDLHRAIQRTQSAMFNQ) the chain is Cytoplasmic. The chain crosses the membrane as a helical span at residues 250–272 (VLILICTLLCLVFTGTCGIQHLE). Residues 273 to 279 (RAGEKLS) are Extracellular-facing. The segment at residues 280-300 (LFKSFYFCIVTFSTVGYGDVT) is an intramembrane region (pore-forming). V294 and G295 together coordinate K(+). Residues 301–304 (PKIW) are Extracellular-facing. The chain crosses the membrane as a helical span at residues 305 to 326 (PSQLLVVIMICVALVVLPLQFE). Residues 327–1201 (ELVYLWMERQ…NPETRDETQL (875 aa)) lie on the Cytoplasmic side of the membrane. One can recognise an RCK N-terminal 1 domain in the interval 350–486 (EKHVVLCVSS…FHVKFADHVV (137 aa)). Positions 511, 514, 536, and 538 each coordinate Na(+). Residues C750 and C751 each coordinate Zn(2+). Residues R753 and K756 each contribute to the K(+) site. Na(+) is bound by residues R753 and K756. C758 and H760 together coordinate Zn(2+). 3 residues coordinate K(+): N761, Y769, and G770. Residue F771 coordinates Na(+). The 141-residue stretch at 773-913 (NKLIIVSAET…QFRAKDSYSL (141 aa)) folds into the RCK N-terminal 2 domain. Positions 779, 810, 812, 834, and 857 each coordinate K(+). The disordered stretch occupies residues 1175–1201 (NDGHSRKSSCSNKLGPCNPETRDETQL).

It belongs to the potassium channel family. Calcium-activated (TC 1.A.1.3) subfamily. KCa4.1/KCNT1 sub-subfamily. In terms of assembly, homotetramer; which constitutes the Na(+)-activated K(+) channel. Interacts with KCNT2; these heterodimer channels differ from the homomers in their unitary conductance, kinetic behavior, subcellular localization, and response to activation of protein kinase C. In terms of processing, phosphorylated by protein kinase C. Phosphorylation of the C-terminal domain increases channel activity.

It is found in the cell membrane. The enzyme catalyses K(+)(in) = K(+)(out). With respect to regulation, activated by high intracellular Na(+). In addition to activation by Na(+), is cooperatively activated by intracellular Cl(-) levels. Inhibited by Zn(2+). Activated upon stimulation of G-protein coupled receptors, such as CHRM1 and GRIA1. Functionally, sodium-activated K(+) channel. Acts as an important mediator of neuronal membrane excitability. Contributes to the delayed outward currents. Regulates of neuronal bursting in sensory neurons. Contributes to synaptic development and plasticity. The polypeptide is Potassium channel subfamily T member 1 (KCNT1) (Gallus gallus (Chicken)).